A 224-amino-acid polypeptide reads, in one-letter code: UPF0758 protein Maqu_3564 (224 aa).

The MPN domain occupies 102–224 (PLRSPADTRR…VISLAERGLM (123 aa)). The Zn(2+) site is built by H173, H175, and D186. The short motif at 173–186 (HNHPSGVAEPSQAD) is the JAMM motif element.

This sequence belongs to the UPF0758 family.

In Marinobacter nauticus (strain ATCC 700491 / DSM 11845 / VT8) (Marinobacter aquaeolei), this protein is UPF0758 protein Maqu_3564.